Consider the following 123-residue polypeptide: MSSPLSPLYVLPFVDHTKWTRWRSLISLQAYSNLFGRTSAMQPDVAAGDEAWGDVLTLSPDADTADMHAQFICHGQFAEFVQPSNTSSNLEPWRPVVDDSEIFAAGCHPGISEGIQQADEGPR.

To M.tuberculosis Rv0477.

This is an uncharacterized protein from Mycobacterium leprae (strain TN).